The primary structure comprises 418 residues: MADRYENQPPEKLQGKYQAMVVCCILGIGSLVSWNSMLTIADYYYKVFPDYHPSRVLTLVYQPFALGTILILAYHESKINTRKRNLIGYILFTISTFLLIVLDLATKGRGGIGPYIGLCAVVASFGLADATVQGGMIGDLSLMCPELVQSFMGGLAVSGALTSALRLITKAAFEKTNDGPRKGAMMFLAISTCIELLCVFLYAYVFPKLPIVKYYRRKAASEGSKTVSADLAAAGIQNQSDLTDDDSKNQRLSNKELLIQNIDYAVNLFLIYVCTLSIFPGFLYENTGQHGLGDWYALVLVAMYNCWDLVGRYTPLVKWLKIENRKLITIAVLSRYLLIPAFYFTAKYGDQGWMIMLISVLGLTNGHLTVCIMTIAPKGYKGPEQNALGNLLVIFLLGGIFAGVALDWLWLIGKKNAF.

The next 11 membrane-spanning stretches (helical) occupy residues 20 to 40 (MVVC…MLTI), 56 to 76 (VLTL…AYHE), 86 to 106 (LIGY…DLAT), 112 to 132 (IGPY…DATV), 142 to 162 (LMCP…GALT), 186 to 206 (MFLA…AYVF), 264 to 284 (YAVN…GFLY), 291 to 311 (GLGD…DLVG), 326 to 346 (KLIT…YFTA), 353 to 373 (WMIM…VCIM), and 392 to 412 (LVIF…LWLI).

Belongs to the SLC29A/ENT transporter (TC 2.A.57) family. Expressed in root tips, vasculature of roots and leaves, and meristems of leaf primordia. Expressed in flowers and siliques.

The protein resides in the cell membrane. Its function is as follows. Nucleoside transporter that functions as a pyrimidine nucleoside carrier in all organs. Has high affinity for adenosine and uridine when expressed in a heterologous system (yeast). Mediates proton-dependent adenosine or uridine transport in Xenopus oocytes. The protein is Equilibrative nucleotide transporter 3 of Arabidopsis thaliana (Mouse-ear cress).